The primary structure comprises 258 residues: Protein SAWADEE HOMEODOMAIN HOMOLOG 1 (258 aa).

Residues 138–244 (AWYDVSSFLT…LVRYELDNTE (107 aa)) form an SAWADEE domain region. Residues C191, H225, C230, and C232 each contribute to the Zn(2+) site.

In terms of assembly, associates with the RNA polymerase IV (Pol IV) complex. Interacts with NRPD1, NRPD2, NRPD3, NRPD3B, CLSY1 and CLSY2.

It is found in the nucleus. Functionally, involved in RNA-directed DNA methylation (RdDM). Required for the silencing of some endogenous RdDM targets and accumulation of 24-nt siRNAs, but not for the production of Pol V-dependent transcripts. Functions in transcriptional silencing through both DNA methylation-dependent and -independent pathways. Required for both maintenance and de-novo DNA methylation. Plays a role in the recruitment of Pol IV to genomic regions associated with K9 methylated histone H3 that are targets for RdDM. The protein is Protein SAWADEE HOMEODOMAIN HOMOLOG 1 (SHH1) of Arabidopsis thaliana (Mouse-ear cress).